The sequence spans 208 residues: Redox-sensing transcriptional repressor Rex (208 aa).

Residues 16–55 (LYYRCLSELNEKGEDKVSSAVLERLLKIDAATVRRDFSYF) constitute a DNA-binding region (H-T-H motif). 90–95 (GVGNLG) serves as a coordination point for NAD(+).

Belongs to the transcriptional regulatory Rex family. In terms of assembly, homodimer.

It localises to the cytoplasm. Its function is as follows. Modulates transcription in response to changes in cellular NADH/NAD(+) redox state. This chain is Redox-sensing transcriptional repressor Rex, found in Pediococcus pentosaceus (strain ATCC 25745 / CCUG 21536 / LMG 10740 / 183-1w).